A 453-amino-acid chain; its full sequence is Asparagine--tRNA ligase (453 aa).

It belongs to the class-II aminoacyl-tRNA synthetase family. Homodimer.

Its subcellular location is the cytoplasm. It catalyses the reaction tRNA(Asn) + L-asparagine + ATP = L-asparaginyl-tRNA(Asn) + AMP + diphosphate + H(+). This is Asparagine--tRNA ligase from Malacoplasma penetrans (strain HF-2) (Mycoplasma penetrans).